Consider the following 1185-residue polypeptide: Liprin-alpha-4 (1185 aa).

Coiled-coil stretches lie at residues A24 to S123 and D165 to G499. Disordered regions lie at residues S638 to R709 and E721 to I757. The residue at position 640 (S640) is a Phosphoserine. Positions G645–A656 are enriched in polar residues. S681 carries the phosphoserine modification. The segment covering S684–I695 has biased composition (basic and acidic residues). Residues D729–D742 show a composition bias toward low complexity. 3 SAM domains span residues W829–L895, N944–L1008, and W1032–L1101.

This sequence belongs to the liprin family. Liprin-alpha subfamily. As to quaternary structure, forms homodimers and heterodimers with liprins-alpha and liprins-beta. Interacts with the second PTPase domain of PTPRD, PTPRF and PTPRS. Interacts with RIMS1 and RIMS2. Interacts with GIT1 and GIT2. Interacts with GRIP1. Interacts with KIF1A. As to expression, expressed only in the heart, brain, and skeletal muscle.

It localises to the cytoplasm. It is found in the cell surface. In terms of biological role, may regulate the disassembly of focal adhesions. May localize receptor-like tyrosine phosphatases type 2A at specific sites on the plasma membrane, possibly regulating their interaction with the extracellular environment and their association with substrates. This chain is Liprin-alpha-4 (PPFIA4), found in Homo sapiens (Human).